The following is a 133-amino-acid chain: Sec-independent protein translocase protein TatB (133 aa).

A helical transmembrane segment spans residues 1–21 (MFDIGFWELVLIAIVALVVLG). The interval 67–133 (EQMGMQNLSP…ASQPAEKKAE (67 aa)) is disordered. Polar residues predominate over residues 70–84 (GMQNLSPELQKSVES). Residues 97–116 (AATPSSEASSTSSNPSSATE) are compositionally biased toward low complexity.

This sequence belongs to the TatB family. In terms of assembly, the Tat system comprises two distinct complexes: a TatABC complex, containing multiple copies of TatA, TatB and TatC subunits, and a separate TatA complex, containing only TatA subunits. Substrates initially bind to the TatABC complex, which probably triggers association of the separate TatA complex to form the active translocon.

It localises to the cell inner membrane. Part of the twin-arginine translocation (Tat) system that transports large folded proteins containing a characteristic twin-arginine motif in their signal peptide across membranes. Together with TatC, TatB is part of a receptor directly interacting with Tat signal peptides. TatB may form an oligomeric binding site that transiently accommodates folded Tat precursor proteins before their translocation. This chain is Sec-independent protein translocase protein TatB, found in Vibrio cholerae serotype O1 (strain ATCC 39315 / El Tor Inaba N16961).